The following is a 406-amino-acid chain: Putative permease Rv2963 (406 aa).

9 consecutive transmembrane segments (helical) span residues 30–50 (WEILWALILGFALSAVVQAVV), 67–87 (LVIATGLGAASSSCSYAAVAL), 111–131 (LVVELGIILALLMGWQFTAAE), 132–152 (FVGGPIMILVLAVLFRLFVGA), 208–228 (LAILRDLILGLLIAGAIAAWV), 246–266 (AVWGPIIGPIVAIVSFVCSIG), 278–298 (GISFGGVIAFIFADLLILPIL), 312–332 (VLLGTFYASMVVAGYLIELLF), and 361–381 (VIFLVIAAALVVRFITSGGLP).

Belongs to the UPF0718 family.

Its subcellular location is the cell membrane. This Mycobacterium tuberculosis (strain ATCC 25618 / H37Rv) protein is Putative permease Rv2963.